Reading from the N-terminus, the 597-residue chain is Aspartate--tRNA ligase (597 aa).

Glu171 contacts L-aspartate. The interval 195 to 198 (QLFK) is aspartate. Residue Arg217 coordinates L-aspartate. ATP is bound by residues 217-219 (RDE) and Gln226. His448 contacts L-aspartate. Glu482 contributes to the ATP binding site. Arg489 is an L-aspartate binding site. 534–537 (GLDR) is an ATP binding site.

Belongs to the class-II aminoacyl-tRNA synthetase family. Type 1 subfamily. Homodimer.

It localises to the cytoplasm. It carries out the reaction tRNA(Asp) + L-aspartate + ATP = L-aspartyl-tRNA(Asp) + AMP + diphosphate. Catalyzes the attachment of L-aspartate to tRNA(Asp) in a two-step reaction: L-aspartate is first activated by ATP to form Asp-AMP and then transferred to the acceptor end of tRNA(Asp). The chain is Aspartate--tRNA ligase from Photobacterium profundum (strain SS9).